The sequence spans 87 residues: Protein Tat (87 aa).

The disordered stretch occupies residues 1–21; it reads MDPVDPNLEPWNHPGSQPRTP. The segment at 1–24 is interaction with human CREBBP; that stretch reads MDPVDPNLEPWNHPGSQPRTPCNK. The segment at 1–48 is transactivation; that stretch reads MDPVDPNLEPWNHPGSQPRTPCNKCYCKKCCYHCQMCFITKGLGISYG. Positions 22, 25, and 27 each coordinate Zn(2+). Residues 22–37 form a cysteine-rich region; that stretch reads CNKCYCKKCCYHCQMC. Residue Lys28 is modified to N6-acetyllysine; by host PCAF. Zn(2+) is bound by residues Cys30, His33, Cys34, and Cys37. The tract at residues 38–48 is core; it reads FITKGLGISYG. The segment at 45–87 is disordered; it reads ISYGRKKRRQRRRPPQGNQAHQDPLPEQPSSQHRGDHPTGPKE. Residues 48–58 are compositionally biased toward basic residues; the sequence is GRKKRRQRRRP. The Nuclear localization signal, RNA-binding (TAR), and protein transduction signature appears at 49-57; sequence RKKRRQRRR. The interaction with the host capping enzyme RNGTT stretch occupies residues 49-87; sequence RKKRRQRRRPPQGNQAHQDPLPEQPSSQHRGDHPTGPKE. N6-acetyllysine; by host EP300 and GCN5L2 occurs at positions 50 and 51. Asymmetric dimethylarginine; by host PRMT6 is present on residues Arg52 and Arg53. Residues 77 to 87 are compositionally biased toward basic and acidic residues; it reads HRGDHPTGPKE. The Cell attachment site signature appears at 78 to 80; the sequence is RGD.

It belongs to the lentiviruses Tat family. In terms of assembly, interacts with host CCNT1. Associates with the P-TEFb complex composed at least of Tat, P-TEFb (CDK9 and CCNT1), TAR RNA, RNA Pol II. Recruits the HATs CREBBP, TAF1/TFIID, EP300, PCAF and GCN5L2. Interacts with host KAT5/Tip60; this interaction targets the latter to degradation. Interacts with the host deacetylase SIRT1. Interacts with host capping enzyme RNGTT; this interaction stimulates RNGTT. Binds to host KDR, and to the host integrins ITGAV/ITGB3 and ITGA5/ITGB1. Interacts with host KPNB1/importin beta-1 without previous binding to KPNA1/importin alpha-1. Interacts with EIF2AK2. Interacts with host nucleosome assembly protein NAP1L1; this interaction may be required for the transport of Tat within the nucleus, since the two proteins interact at the nuclear rim. Interacts with host C1QBP/SF2P32; this interaction involves lysine-acetylated Tat. Interacts with the host chemokine receptors CCR2, CCR3 and CXCR4. Interacts with host DPP4/CD26; this interaction may trigger an anti-proliferative effect. Interacts with host LDLR. Interacts with the host extracellular matrix metalloproteinase MMP1. Interacts with host PRMT6; this interaction mediates Tat's methylation. Interacts with, and is ubiquitinated by MDM2/Hdm2. Interacts with host PSMC3 and HTATIP2. Interacts with STAB1; this interaction may overcome SATB1-mediated repression of IL2 and IL2RA (interleukin) in T cells by binding to the same domain than HDAC1. Interacts (when acetylated) with human CDK13, thereby increasing HIV-1 mRNA splicing and promoting the production of the doubly spliced HIV-1 protein Nef. Interacts with host TBP; this interaction modulates the activity of transcriptional pre-initiation complex. Interacts with host RELA. Interacts with host PLSCR1; this interaction negatively regulates Tat transactivation activity by altering its subcellular distribution. Post-translationally, asymmetrical arginine methylation by host PRMT6 seems to diminish the transactivation capacity of Tat and affects the interaction with host CCNT1. Acetylation by EP300, CREBBP, GCN5L2/GCN5 and PCAF regulates the transactivation activity of Tat. EP300-mediated acetylation of Lys-50 promotes dissociation of Tat from the TAR RNA through the competitive binding to PCAF's bromodomain. In addition, the non-acetylated Tat's N-terminus can also interact with PCAF. PCAF-mediated acetylation of Lys-28 enhances Tat's binding to CCNT1. Lys-50 is deacetylated by SIRT1. In terms of processing, polyubiquitination by host MDM2 does not target Tat to degradation, but activates its transactivation function and fosters interaction with CCNT1 and TAR RNA. Post-translationally, phosphorylated by EIF2AK2 on serine and threonine residues adjacent to the basic region important for TAR RNA binding and function. Phosphorylation of Tat by EIF2AK2 is dependent on the prior activation of EIF2AK2 by dsRNA.

The protein resides in the host nucleus. Its subcellular location is the host nucleolus. The protein localises to the host cytoplasm. It localises to the secreted. Functionally, transcriptional activator that increases RNA Pol II processivity, thereby increasing the level of full-length viral transcripts. Recognizes a hairpin structure at the 5'-LTR of the nascent viral mRNAs referred to as the transactivation responsive RNA element (TAR) and recruits the cyclin T1-CDK9 complex (P-TEFb complex) that will in turn hyperphosphorylate the RNA polymerase II to allow efficient elongation. The CDK9 component of P-TEFb and other Tat-activated kinases hyperphosphorylate the C-terminus of RNA Pol II that becomes stabilized and much more processive. Other factors such as HTATSF1/Tat-SF1, SUPT5H/SPT5, and HTATIP2 are also important for Tat's function. Besides its effect on RNA Pol II processivity, Tat induces chromatin remodeling of proviral genes by recruiting the histone acetyltransferases (HATs) CREBBP, EP300 and PCAF to the chromatin. This also contributes to the increase in proviral transcription rate, especially when the provirus integrates in transcriptionally silent region of the host genome. To ensure maximal activation of the LTR, Tat mediates nuclear translocation of NF-kappa-B by interacting with host RELA. Through its interaction with host TBP, Tat may also modulate transcription initiation. Tat can reactivate a latently infected cell by penetrating in it and transactivating its LTR promoter. In the cytoplasm, Tat is thought to act as a translational activator of HIV-1 mRNAs. Extracellular circulating Tat can be endocytosed by surrounding uninfected cells via the binding to several surface receptors such as CD26, CXCR4, heparan sulfate proteoglycans (HSPG) or LDLR. Neurons are rarely infected, but they internalize Tat via their LDLR. Through its interaction with nuclear HATs, Tat is potentially able to control the acetylation-dependent cellular gene expression. Modulates the expression of many cellular genes involved in cell survival, proliferation or in coding for cytokines or cytokine receptors. Tat plays a role in T-cell and neurons apoptosis. Tat induced neurotoxicity and apoptosis probably contribute to neuroAIDS. Circulating Tat also acts as a chemokine-like and/or growth factor-like molecule that binds to specific receptors on the surface of the cells, affecting many cellular pathways. In the vascular system, Tat binds to ITGAV/ITGB3 and ITGA5/ITGB1 integrins dimers at the surface of endothelial cells and competes with bFGF for heparin-binding sites, leading to an excess of soluble bFGF. In Homo sapiens (Human), this protein is Protein Tat.